The chain runs to 146 residues: Ribonuclease H (146 aa).

One can recognise an RNase H type-1 domain in the interval 1–143; sequence MEKKVTIYTD…CDELARLAVR (143 aa). Mg(2+) is bound by residues Asp10, Glu48, Asp70, and Asp135.

Belongs to the RNase H family. As to quaternary structure, monomer. Mg(2+) is required as a cofactor.

Its subcellular location is the cytoplasm. The catalysed reaction is Endonucleolytic cleavage to 5'-phosphomonoester.. Endonuclease that specifically degrades the RNA of RNA-DNA hybrids. The chain is Ribonuclease H from Chlorobium phaeovibrioides (strain DSM 265 / 1930) (Prosthecochloris vibrioformis (strain DSM 265)).